Reading from the N-terminus, the 493-residue chain is Cytochrome P450 2E1 (493 aa).

A substrate-binding site is contributed by 298–303 (FAGTET). A heme-binding site is contributed by cysteine 437.

It belongs to the cytochrome P450 family. Interacts with chaperones HSP70 and HSP90; this interaction is required for initial targeting to mitochondria. Heme serves as cofactor.

It localises to the endoplasmic reticulum membrane. It is found in the microsome membrane. The protein resides in the mitochondrion inner membrane. The catalysed reaction is an organic molecule + reduced [NADPH--hemoprotein reductase] + O2 = an alcohol + oxidized [NADPH--hemoprotein reductase] + H2O + H(+). The enzyme catalyses (5Z,8Z,11Z)-eicosatrienoate + reduced [NADPH--hemoprotein reductase] + O2 = 19-hydroxy-(5Z,8Z,11Z)-eicosatrienoate + oxidized [NADPH--hemoprotein reductase] + H2O + H(+). It catalyses the reaction (5Z,8Z,11Z,14Z,17Z)-eicosapentaenoate + reduced [NADPH--hemoprotein reductase] + O2 = 19-hydroxy-(5Z,8Z,11Z,14Z,17Z)-eicosapentaenoate + oxidized [NADPH--hemoprotein reductase] + H2O + H(+). It carries out the reaction (4Z,7Z,10Z,13Z,16Z,19Z)-docosahexaenoate + reduced [NADPH--hemoprotein reductase] + O2 = 21-hydroxy-(4Z,7Z,10Z,13Z,16Z,19Z)-docosahexaenoate + oxidized [NADPH--hemoprotein reductase] + H2O + H(+). The catalysed reaction is dodecanoate + reduced [NADPH--hemoprotein reductase] + O2 = 11-hydroxydodecanoate + oxidized [NADPH--hemoprotein reductase] + H2O + H(+). The enzyme catalyses tetradecanoate + reduced [NADPH--hemoprotein reductase] + O2 = 13-hydroxytetradecanoate + oxidized [NADPH--hemoprotein reductase] + H2O + H(+). It catalyses the reaction 4-nitrophenol + NADPH + O2 + H(+) = 4-nitrocatechol + NADP(+) + H2O. The protein operates within lipid metabolism; fatty acid metabolism. With respect to regulation, the omega-1 hydroxylase activity is stimulated by cytochrome b5. A cytochrome P450 monooxygenase involved in the metabolism of fatty acids. Mechanistically, uses molecular oxygen inserting one oxygen atom into a substrate, and reducing the second into a water molecule, with two electrons provided by NADPH via cytochrome P450 reductase (NADPH--hemoprotein reductase). Catalyzes the hydroxylation of carbon-hydrogen bonds. Hydroxylates fatty acids specifically at the omega-1 position displaying the highest catalytic activity for saturated fatty acids. May be involved in the oxidative metabolism of xenobiotics. The polypeptide is Cytochrome P450 2E1 (Homo sapiens (Human)).